The following is a 293-amino-acid chain: Acetylglutamate kinase (293 aa).

Substrate is bound by residues 70-71, Arg92, and Asn186; that span reads GG.

This sequence belongs to the acetylglutamate kinase family. ArgB subfamily.

The protein resides in the cytoplasm. It carries out the reaction N-acetyl-L-glutamate + ATP = N-acetyl-L-glutamyl 5-phosphate + ADP. It participates in amino-acid biosynthesis; L-arginine biosynthesis; N(2)-acetyl-L-ornithine from L-glutamate: step 2/4. Functionally, catalyzes the ATP-dependent phosphorylation of N-acetyl-L-glutamate. The chain is Acetylglutamate kinase from Synechococcus sp. (strain CC9605).